We begin with the raw amino-acid sequence, 434 residues long: MTNFSPREIVSELDRYIIGQKDAKRAVAIALRNRWRRQQLSDELRDEVMPKNILMIGPTGVGKTEISRRLAKLAGAPFVKVEATKFTEVGYVGRDVEQIVRDLVEVGITLVREKKRAEVKAKAHQNAEERVLDALVGTTASPATRDSFRKKLRANELDEKEIEIDIAETGAPGGFEIPGMPGANIGVLNLSEMFGKALGGRTRKVKTTVKDSYELLVNDESDKLLDNEQIQREAMAAAENDGIVFLDEIDKIAARDGGIGAGVSREGVQRDLLPLVEGTTVATKYGPMKTDHILFIASGAFHVSKPSDLLPELQGRLPIRVELRALTKEDFRRILTETEASLIRQYKALLETEGVALDFTEDAIDALAEVAVQLNANVENIGARRLQTVMERVLDDISFNAPDRGGDTLMIDADYVRKHVGDLAANTDLSRYIL.

ATP-binding positions include isoleucine 18, glycine 60–glutamate 65, aspartate 247, glutamate 312, and arginine 384.

The protein belongs to the ClpX chaperone family. HslU subfamily. A double ring-shaped homohexamer of HslV is capped on each side by a ring-shaped HslU homohexamer. The assembly of the HslU/HslV complex is dependent on binding of ATP.

It localises to the cytoplasm. In terms of biological role, ATPase subunit of a proteasome-like degradation complex; this subunit has chaperone activity. The binding of ATP and its subsequent hydrolysis by HslU are essential for unfolding of protein substrates subsequently hydrolyzed by HslV. HslU recognizes the N-terminal part of its protein substrates and unfolds these before they are guided to HslV for hydrolysis. In Sinorhizobium fredii (strain NBRC 101917 / NGR234), this protein is ATP-dependent protease ATPase subunit HslU.